Here is a 404-residue protein sequence, read N- to C-terminus: 5-azacytidine-induced protein 2 (404 aa).

The interval 1 to 198 is homodimerization; sequence MDTLVEDDIC…TELQKARQTG (198 aa). A coiled-coil region spans residues 40–198; it reads ALVTAYEDIK…TELQKARQTG (159 aa). Positions 229 to 269 are interaction with TBK1 and IKBKE; the sequence is SDHMQHAYWELRREMANLHLVTRVQAELLRQLKTAAAGKAC. Serine 330 carries the post-translational modification Phosphoserine. 2 disordered regions span residues 332–351 and 356–390; these read TDNE…HNSY and LEDN…LPPL. Residue serine 365 is modified to Phosphoserine.

As to quaternary structure, homodimer. Interacts with IKBKE, TBK1 and TICAM1. Interacts with TAX1BP1. Interacts with CALCOCO2. Post-translationally, ubiquitinated via 'Lys-48'-linked polyubiquitination by TRIM38, leading to its degradation.

The protein resides in the cytoplasm. In terms of biological role, adapter protein which binds TBK1 and IKBKE playing a role in antiviral innate immunity. Activates serine/threonine-protein kinase TBK1 and facilitates its oligomerization. Enhances the phosphorylation of NF-kappa-B p65 subunit RELA by TBK1. Promotes TBK1-induced as well as TNF-alpha or PMA-induced activation of NF-kappa-B. Participates in IFNB promoter activation via TICAM1. This is 5-azacytidine-induced protein 2 (Azi2) from Rattus norvegicus (Rat).